A 460-amino-acid chain; its full sequence is Argininosuccinate lyase (460 aa).

This sequence belongs to the lyase 1 family. Argininosuccinate lyase subfamily.

It localises to the cytoplasm. The enzyme catalyses 2-(N(omega)-L-arginino)succinate = fumarate + L-arginine. The protein operates within amino-acid biosynthesis; L-arginine biosynthesis; L-arginine from L-ornithine and carbamoyl phosphate: step 3/3. This is Argininosuccinate lyase from Campylobacter jejuni (strain RM1221).